Consider the following 159-residue polypeptide: Large ribosomal subunit protein uL11 (159 aa).

The span at 137-149 (EGKDPREVQREVD) shows a compositional bias: basic and acidic residues. Positions 137–159 (EGKDPREVQREVDSGAWDKLLGG) are disordered.

Belongs to the universal ribosomal protein uL11 family. In terms of assembly, part of the ribosomal stalk of the 50S ribosomal subunit. Interacts with L10 and the large rRNA to form the base of the stalk. L10 forms an elongated spine to which L12 dimers bind in a sequential fashion forming a multimeric L10(L12)X complex.

Its function is as follows. Forms part of the ribosomal stalk which helps the ribosome interact with GTP-bound translation factors. The protein is Large ribosomal subunit protein uL11 of Korarchaeum cryptofilum (strain OPF8).